Here is a 238-residue protein sequence, read N- to C-terminus: MLVIPAVDMKNKKCVQLIQGNPDKKHVELDNPPEIAKKWVSEGAEMLHLVDLDGALDGKRVNDEFIEEIIKTSGVPVQIGGGIRSIEDAVYLVEKGAKKVIIGTIAVEKPEIIKELSENIGSEKIMVSLDAKDGKVVIKGWKEKTKYTPVEIGKILEEMGAGSILFTNVDSEGLLNGINIEPTKELVENLKIPIVASGGVTTIDDLLKFKEIGVYGVVVGSAIYKNMINLKDAIEAVK.

The active-site Proton acceptor is the Asp-8. Asp-130 acts as the Proton donor in catalysis.

It belongs to the HisA/HisF family.

Its subcellular location is the cytoplasm. It catalyses the reaction 1-(5-phospho-beta-D-ribosyl)-5-[(5-phospho-beta-D-ribosylamino)methylideneamino]imidazole-4-carboxamide = 5-[(5-phospho-1-deoxy-D-ribulos-1-ylimino)methylamino]-1-(5-phospho-beta-D-ribosyl)imidazole-4-carboxamide. Its pathway is amino-acid biosynthesis; L-histidine biosynthesis; L-histidine from 5-phospho-alpha-D-ribose 1-diphosphate: step 4/9. The sequence is that of 1-(5-phosphoribosyl)-5-[(5-phosphoribosylamino)methylideneamino] imidazole-4-carboxamide isomerase from Methanococcus maripaludis (strain C5 / ATCC BAA-1333).